The chain runs to 515 residues: Maturase K (515 aa).

It belongs to the intron maturase 2 family. MatK subfamily.

It localises to the plastid. The protein localises to the chloroplast. Its function is as follows. Usually encoded in the trnK tRNA gene intron. Probably assists in splicing its own and other chloroplast group II introns. The protein is Maturase K of Picea mariana (Black spruce).